The sequence spans 422 residues: UDP-N-acetylglucosamine 1-carboxyvinyltransferase (422 aa).

23–24 is a binding site for phosphoenolpyruvate; that stretch reads KN. A UDP-N-acetyl-alpha-D-glucosamine-binding site is contributed by R92. The Proton donor role is filled by C116. C116 bears the 2-(S-cysteinyl)pyruvic acid O-phosphothioketal mark. Residues 121–125, 161–165, D306, and I328 each bind UDP-N-acetyl-alpha-D-glucosamine; these read RPVDL and KVSVG.

Belongs to the EPSP synthase family. MurA subfamily.

It localises to the cytoplasm. The enzyme catalyses phosphoenolpyruvate + UDP-N-acetyl-alpha-D-glucosamine = UDP-N-acetyl-3-O-(1-carboxyvinyl)-alpha-D-glucosamine + phosphate. Its pathway is cell wall biogenesis; peptidoglycan biosynthesis. Cell wall formation. Adds enolpyruvyl to UDP-N-acetylglucosamine. This is UDP-N-acetylglucosamine 1-carboxyvinyltransferase from Aliivibrio fischeri (strain MJ11) (Vibrio fischeri).